The sequence spans 800 residues: General transcription and DNA repair factor IIH helicase/translocase subunit XPB (800 aa).

The segment at 1 to 27 is disordered; it reads MSSGDSNLKRRRGGNTGQSSKSYNTWT. Residues 17–27 are compositionally biased toward polar residues; that stretch reads GQSSKSYNTWT. The region spanning 329-491 is the Helicase ATP-binding domain; the sequence is MFGNGRARSG…DLNFLIGPKL (163 aa). 342 to 349 contacts ATP; that stretch reads LPCGAGKS. Positions 444–447 match the DEVH box motif; that stretch reads DEVH. The region spanning 546–704 is the Helicase C-terminal domain; the sequence is RACEYLIRFH…ELPGIDQEVN (159 aa). The interval 743 to 769 is disordered; the sequence is GAKKSKSSAPTVSRTTGGSTRALSGGN. Polar residues predominate over residues 749-764; the sequence is SSAPTVSRTTGGSTRA.

Belongs to the helicase family. RAD25/XPB subfamily. Component of the 7-subunit TFIIH core complex composed of XPB/repB, XPD/repD, gtf2h1, gtf2h2, gtf2h3, gtf2h4 and gtf2h5, which is active in NER. The core complex associates with the 3-subunit CDK-activating kinase (CAK) module composed of cycH/cyclin H, cdk7 and mnat1 to form the 10-subunit holoenzyme (holo-TFIIH) active in transcription.

The protein resides in the nucleus. It carries out the reaction Couples ATP hydrolysis with the unwinding of duplex DNA by translocating in the 3'-5' direction.. The enzyme catalyses ATP + H2O = ADP + phosphate + H(+). Its function is as follows. ATP-dependent 3'-5' DNA helicase/translocase; binds dsDNA rather than ssDNA, unzipping it in a translocase rather than classical helicase activity. Component of the general transcription and DNA repair factor IIH (TFIIH) core complex. When complexed to CDK-activating kinase (CAK), involved in RNA transcription by RNA polymerase II. The ATPase activity of XPB/ERCC3, but not its helicase activity, is required for DNA opening; it may wrap around the damaged DNA wedging it open, causing localized melting and twisting that allows XPD/ERCC2 helicase to anchor. The ATP-dependent helicase activity of XPB/ERCC3 may be required for promoter escape. Also involved in transcription-coupled nucleotide excision repair (NER) of damaged DNA. In NER, TFIIH acts by opening DNA around the lesion to allow the excision of the damaged oligonucleotide and its replacement by a new DNA fragment. The structure of the TFIIH transcription complex differs from the NER-TFIIH complex. The chain is General transcription and DNA repair factor IIH helicase/translocase subunit XPB from Dictyostelium discoideum (Social amoeba).